Here is a 247-residue protein sequence, read N- to C-terminus: MILMRAPIVEVFSSIQGEGLLVGRRQIFVRFAGCNLNCSYCDTPESRDPSAGRLFTAPELTEIIEGLITPDFHSISITGGEPLLYPDFITELLEESPHRTLLETNGSLPSNAERIAHLFDYASVDIKIAEHFSDNLRSGTTESDISSPGDLIDREIQVINILISRGVNTYCKVVVMPTTGAGYIGALAERLLECVDEPERLPLVIQPCSPPEQWAQNTPRLLEMSQEAGKYMDVYVIPQMHRALGLR.

Substrate is bound by residues 15–17 (IQG) and arginine 30. The region spanning 21–247 (LVGRRQIFVR…PQMHRALGLR (227 aa)) is the Radical SAM core domain. 3 residues coordinate [4Fe-4S] cluster: cysteine 34, cysteine 38, and cysteine 41. Threonine 43 provides a ligand contact to Mg(2+). Residue threonine 78 coordinates substrate. Residue glycine 80 participates in S-adenosyl-L-methionine binding.

Belongs to the radical SAM superfamily. 7-carboxy-7-deazaguanine synthase family. Homodimer. [4Fe-4S] cluster serves as cofactor. Requires S-adenosyl-L-methionine as cofactor. The cofactor is Mg(2+).

The catalysed reaction is 6-carboxy-5,6,7,8-tetrahydropterin + H(+) = 7-carboxy-7-deazaguanine + NH4(+). It participates in purine metabolism; 7-cyano-7-deazaguanine biosynthesis. Catalyzes the complex heterocyclic radical-mediated conversion of 6-carboxy-5,6,7,8-tetrahydropterin (CPH4) to 7-carboxy-7-deazaguanine (CDG), a step common to the biosynthetic pathways of all 7-deazapurine-containing compounds. In Methanothermobacter thermautotrophicus (strain ATCC 29096 / DSM 1053 / JCM 10044 / NBRC 100330 / Delta H) (Methanobacterium thermoautotrophicum), this protein is 7-carboxy-7-deazaguanine synthase.